We begin with the raw amino-acid sequence, 126 residues long: Large ribosomal subunit protein bL12 (126 aa).

This sequence belongs to the bacterial ribosomal protein bL12 family. In terms of assembly, homodimer. Part of the ribosomal stalk of the 50S ribosomal subunit. Forms a multimeric L10(L12)X complex, where L10 forms an elongated spine to which 2 to 4 L12 dimers bind in a sequential fashion. Binds GTP-bound translation factors.

Its function is as follows. Forms part of the ribosomal stalk which helps the ribosome interact with GTP-bound translation factors. Is thus essential for accurate translation. The polypeptide is Large ribosomal subunit protein bL12 (Francisella tularensis subsp. mediasiatica (strain FSC147)).